The following is a 122-amino-acid chain: Truncated CrmB protein (122 aa).

In terms of biological role, the protein is truncated in this strain and presumably inactive. It has similarities with variola virus CrmB, but the product is inactivated due to several premature stop codons. The sequence is that of Truncated CrmB protein (OPG002) from Bos taurus (Bovine).